A 485-amino-acid chain; its full sequence is Phosphoglucosamine mutase (485 aa).

Ser-133 serves as the catalytic Phosphoserine intermediate. 4 residues coordinate Mg(2+): Ser-133, Asp-274, Asp-276, and Asp-278. Phosphoserine is present on Ser-133.

Belongs to the phosphohexose mutase family. Mg(2+) is required as a cofactor. Activated by phosphorylation.

The catalysed reaction is alpha-D-glucosamine 1-phosphate = D-glucosamine 6-phosphate. Catalyzes the conversion of glucosamine-6-phosphate to glucosamine-1-phosphate. The chain is Phosphoglucosamine mutase from Crocosphaera subtropica (strain ATCC 51142 / BH68) (Cyanothece sp. (strain ATCC 51142)).